Here is a 1635-residue protein sequence, read N- to C-terminus: U3 small nucleolar RNA-associated protein 10 (1635 aa).

A disordered region spans residues 781-803 (TTSMDAPSDESTKRRRRSSSSTV). 2 consecutive transmembrane segments (helical) span residues 1141 to 1161 (PELL…TVAG) and 1288 to 1308 (IALS…SFMV).

This sequence belongs to the HEATR1/UTP10 family. As to quaternary structure, component of the ribosomal small subunit (SSU) processome.

The protein localises to the nucleus. It is found in the nucleolus. It localises to the membrane. Involved in nucleolar processing of pre-18S ribosomal RNA. Involved in ribosome biosynthesis. In Yarrowia lipolytica (strain CLIB 122 / E 150) (Yeast), this protein is U3 small nucleolar RNA-associated protein 10.